We begin with the raw amino-acid sequence, 1251 residues long: Myosin-1 (1251 aa).

The disordered stretch occupies residues 1–37; that stretch reads MGQSKRPFKNKEEKKSRGFGRSRHDDAGAGGRPQVKK. Positions 9–27 are enriched in basic and acidic residues; that stretch reads KNKEEKKSRGFGRSRHDDA. In terms of domain architecture, Myosin motor spans 48-727; sequence IGVSDLTLLS…TLFALEHMRD (680 aa). 141-148 contacts ATP; the sequence is GESGAGKT. Residue Ser369 is modified to Phosphoserine. The tract at residues 416 to 498 is actin-binding; the sequence is TIGILDIYGF…PGVFAALNDA (83 aa). 2 consecutive IQ domains span residues 731–751 and 752–777; these read HNMA…RTEC and AIRI…QGHK. The 196-residue stretch at 785 to 980 folds into the TH1 domain; sequence RRRYSLVGSR…PGEPANSVSK (196 aa). Disordered regions lie at residues 958–1093 and 1135–1227; these read RDDV…SNEL and AKTP…ASIA. A compositionally biased stretch (low complexity) spans 1040 to 1052; the sequence is VAQSVTAVAAAHA. Pro residues predominate over residues 1061 to 1073; the sequence is RPPPPPPPTQPPA. The SH3 domain maps to 1074–1135; it reads PKKDTAKALY…PEAYLEPIVA (62 aa). Residues 1139-1148 show a composition bias toward pro residues; that stretch reads SLPPPPPSLP. Composition is skewed to polar residues over residues 1150-1161 and 1216-1225; these read QSKSAVSNTLPN and ATPSSLSNAS.

It belongs to the TRAFAC class myosin-kinesin ATPase superfamily. Myosin family. In terms of processing, phosphorylation of the TEDS site (Ser-369) is required for the polarization of the actin cytoskeleton. Phosphorylation probably activates the myosin-I ATPase activity.

Its subcellular location is the cytoplasm. It localises to the cytoskeleton. The protein resides in the actin patch. Its function is as follows. Type-I myosin implicated in the organization of the actin cytoskeleton. Required for proper actin cytoskeleton polarization. At the cell cortex, assembles in patch-like structures together with proteins from the actin-polymerizing machinery and promotes actin assembly. Functions as actin nucleation-promoting factor (NPF) for the Arp2/3 complex. This chain is Myosin-1 (MYO1), found in Coccidioides immitis (strain RS) (Valley fever fungus).